A 180-amino-acid chain; its full sequence is ATP synthase subunit delta (180 aa).

It belongs to the ATPase delta chain family. F-type ATPases have 2 components, F(1) - the catalytic core - and F(0) - the membrane proton channel. F(1) has five subunits: alpha(3), beta(3), gamma(1), delta(1), epsilon(1). CF(0) has four main subunits: a(1), b(1), b'(1) and c(10-14). The alpha and beta chains form an alternating ring which encloses part of the gamma chain. F(1) is attached to F(0) by a central stalk formed by the gamma and epsilon chains, while a peripheral stalk is formed by the delta, b and b' chains.

The protein resides in the cellular thylakoid membrane. Its function is as follows. F(1)F(0) ATP synthase produces ATP from ADP in the presence of a proton or sodium gradient. F-type ATPases consist of two structural domains, F(1) containing the extramembraneous catalytic core and F(0) containing the membrane proton channel, linked together by a central stalk and a peripheral stalk. During catalysis, ATP synthesis in the catalytic domain of F(1) is coupled via a rotary mechanism of the central stalk subunits to proton translocation. In terms of biological role, this protein is part of the stalk that links CF(0) to CF(1). It either transmits conformational changes from CF(0) to CF(1) or is implicated in proton conduction. The protein is ATP synthase subunit delta of Synechococcus elongatus (strain ATCC 33912 / PCC 7942 / FACHB-805) (Anacystis nidulans R2).